Here is a 428-residue protein sequence, read N- to C-terminus: MIDPNLLRSNLDLVAKKLARRKFILNINKFRQQESLRKILQKKTESLQTERKAKAKIIGVAKSRGENVEFLCQEAYVLGKKLTSLKLENKELKNRIKQFELSLPNIPDDQVPYGFRDQDNLEIMRWGKPGQYNFPIRDHVALGALTNGLDFSNATKLTGSRFIVMKGQIAHLHRALSQFMIDLHVKRHGYEEYYLPYLVNQDSLYGAGQLPKFYEDLFHIQHLQSGTNPYALIPTAEVPLINLVRDVILDEEELPIKMVAHTPCFRYEAGSYGHHTRGLIRMHQFDKVEMVQVVHPDKSMQILEEITSHAEQVLQLLKLPYRKILLCTGNIGFSSCKTYDLEVWLPAYNAYCEVSSCSNVGDFQARRIRARYKGRMNRKARLLHTLNASGVAIGRALAAVLENYQLEDGRVAIPSVLSPYMSDITHIN.

Residue 235–237 coordinates L-serine; sequence TAE. 266–268 serves as a coordination point for ATP; the sequence is RYE. E289 is an L-serine binding site. 353 to 356 is an ATP binding site; it reads EVSS. Residue S389 coordinates L-serine.

This sequence belongs to the class-II aminoacyl-tRNA synthetase family. Type-1 seryl-tRNA synthetase subfamily. In terms of assembly, homodimer. The tRNA molecule binds across the dimer.

It is found in the cytoplasm. It carries out the reaction tRNA(Ser) + L-serine + ATP = L-seryl-tRNA(Ser) + AMP + diphosphate + H(+). The catalysed reaction is tRNA(Sec) + L-serine + ATP = L-seryl-tRNA(Sec) + AMP + diphosphate + H(+). It functions in the pathway aminoacyl-tRNA biosynthesis; selenocysteinyl-tRNA(Sec) biosynthesis; L-seryl-tRNA(Sec) from L-serine and tRNA(Sec): step 1/1. Catalyzes the attachment of serine to tRNA(Ser). Is also able to aminoacylate tRNA(Sec) with serine, to form the misacylated tRNA L-seryl-tRNA(Sec), which will be further converted into selenocysteinyl-tRNA(Sec). This Blochmanniella pennsylvanica (strain BPEN) protein is Serine--tRNA ligase.